Consider the following 117-residue polypeptide: Prefoldin subunit beta (117 aa).

Belongs to the prefoldin subunit beta family. Heterohexamer of two alpha and four beta subunits.

The protein resides in the cytoplasm. Functionally, molecular chaperone capable of stabilizing a range of proteins. Seems to fulfill an ATP-independent, HSP70-like function in archaeal de novo protein folding. This is Prefoldin subunit beta (pfdB) from Pyrococcus horikoshii (strain ATCC 700860 / DSM 12428 / JCM 9974 / NBRC 100139 / OT-3).